Here is a 287-residue protein sequence, read N- to C-terminus: MARSRGERTPAARRITSRNARFQQWQALLGNRNKRTRAGEFLVMGVRPISLAVEHGWPVRTLLYDGQRELSKWARELLRTVRTEQIAMAPDLLMELGEKNEAPPEVVAVVEMPADDLDRIPVREDFLGVLFDRPTSPGNIGSIIRSADALGAHGLIVAGHAADVYDPKSVRSSTGSLFSLPAVRVPSPGEVMDWVEARRAAGTPIVLVGTDEHGDCDVFDFDFTQPTLLLIGNETAGLSNAWRTLCDYTVSIPMAGSASSLNAANAATAILYEAVRQRISGRTATTP.

Residues Thr-210–Asp-211, Gly-232, and Ile-252–Met-254 each bind S-adenosyl-L-methionine.

Belongs to the class IV-like SAM-binding methyltransferase superfamily. RNA methyltransferase TsnR/AvirB family. Homodimer.

The enzyme catalyses uridine(2479) in 23S rRNA + S-adenosyl-L-methionine = 2'-O-methyluridine(2479) in 23S rRNA + S-adenosyl-L-homocysteine + H(+). Specifically methylates the 2'-O-ribose position of uridine-2479 in 23S ribosomal RNA. Confers resistance to antibiotic avilamycin, an orthosomycin antibiotic. This Streptomyces viridochromogenes protein is 23S rRNA (uridine(2479)-2'-O)-methyltransferase (aviRb).